The chain runs to 111 residues: Wound-induced proteinase inhibitor 1 (111 aa).

Residues 1-23 (MEAKFAHIILFFLLAFSFETLMA) form the signal peptide. The propeptide occupies 24 to 36 (RKESDGPEVIKLL).

This sequence belongs to the protease inhibitor I13 (potato type I serine protease inhibitor) family.

The protein localises to the secreted. This chain is Wound-induced proteinase inhibitor 1, found in Solanum peruvianum (Peruvian tomato).